The following is a 421-amino-acid chain: Synaptotagmin-1 (421 aa).

Positions 1 to 40 are disordered; sequence MVSESHHEALAAPPATTVAAAPPSNVTEPASPGGGGGKED. The Vesicular segment spans residues 1–60; sequence MVSESHHEALAAPPATTVAAAPPSNVTEPASPGGGGGKEDAFSKLKEKFMNELNKIPLPP. Residues 10–23 are compositionally biased toward low complexity; that stretch reads LAAPPATTVAAAPP. N-linked (GlcNAc...) asparagine glycosylation occurs at Asn-25. Residues 61–81 traverse the membrane as a helical segment; it reads WALIAIAIVAVLLILTCCFCL. Residues Cys-77, Cys-78, Cys-80, Cys-82, and Cys-85 are each lipidated (S-palmitoyl cysteine). At 82 to 421 the chain is on the cytoplasmic side; the sequence is CKKCLFKKKN…EVDAMLAVKK (340 aa). The disordered stretch occupies residues 94–139; the sequence is KGKEKGGKNAINMKDVKDLGKTMKDQDDDAETGLTDGEEKEEPKEV. A compositionally biased stretch (basic and acidic residues) spans 107–118; it reads KDVKDLGKTMKD. The segment covering 119–133 has biased composition (acidic residues); sequence QDDDAETGLTDGEEK. Residues 135-381 form a phospholipid binding region; sequence EPKEVEKLGK…AIGKVFVGYN (247 aa). 2 C2 domains span residues 141–260 and 272–405; these read KLGK…EEWR and KLGD…AQWH. Ca(2+)-binding residues include Leu-171, Asp-172, Asp-178, Asp-230, Phe-231, Asp-232, Ser-235, Lys-236, Asp-238, Asp-303, Asp-309, Asp-363, Asp-365, and Asp-371.

This sequence belongs to the synaptotagmin family. In terms of assembly, homotetramer. Ca(2+) serves as cofactor.

It localises to the cytoplasmic vesicle. It is found in the secretory vesicle membrane. The protein resides in the secretory vesicle. Its subcellular location is the synaptic vesicle membrane. The protein localises to the chromaffin granule membrane. It localises to the cytoplasm. Functionally, calcium sensor that participates in triggering neurotransmitter release at the synapse. May have a regulatory role in the membrane interactions during trafficking of synaptic vesicles at the active zone of the synapse. It binds acidic phospholipids with a specificity that requires the presence of both an acidic head group and a diacyl backbone. May play a role in dendrite formation by melanocytes. May play a role in regulating the secretion of hormones relevant to the reproduction and egg-laying of female geese. The sequence is that of Synaptotagmin-1 from Anser cygnoides (Swan goose).